Reading from the N-terminus, the 485-residue chain is Dynein axonemal assembly factor 3 (485 aa).

Belongs to the DNAAF3 family.

The protein resides in the cytoplasm. The protein localises to the dynein axonemal particle. In terms of biological role, required for the assembly of axonemal inner and outer dynein arms. Involved in preassembly of dyneins into complexes before their transport into cilia. The polypeptide is Dynein axonemal assembly factor 3 (dnaaf3) (Xenopus laevis (African clawed frog)).